The primary structure comprises 1316 residues: MLDVNFFDELRIGLATAEDIRQWSYGEVKKPETINYRTLKPEKDGLFCEKIFGPTRDWECYCGKYKRVRFKGIICERCGVEVTRAKVRRERMGHIELAAPVTHIWYFKGVPSRLGYLLDLAPKDLEKIIYFAAYVITSVDNEMRHNELSTLEAEMMVERKAVEDQRDADLEARAQKLEADLAELEAEGAKADARRKVRDSGEREMRQLRDRAQRELDRLEDIWSTFTKLAPKQLIVDENLYRELQDRYGEYFTGAMGAESIQKLIETFDIDAEAEILRDVIRNGKGQKKLRALKRLKVVAAFQQSGNSPMGMVLDAVPVIPPELRPLVQLDGGRFATSDLNDLYRRVINRNNRLKRLIDLGAPEIIVNNEKRMLQESVDALFDNGRRGRPVTGPGNRPLKSLSDLLKGKQGRFRQNLLGKRVDYSGRSVIVVGPQLKLHQCGLPKLMALELFKPFVMKRLVDLNHAQNIKSAKRMVERQRPQVWDVLEEVIAEHPVLLNRAPTLHRLGIQAFEPMLVEGKAIQLHPLVCEAFNADFDGDQMAVHLPLSAEAQAEARILMLSSNNILSPASGRPLAMPRLDMVTGLYYLTTEVEGDKGAYQPAVQDSPETGVYSSPAEAIMAADRGVLSVRAKIKVRLTQLRPPAEIEDELFGHNGWQPGDAWTAETTLGRVLFNELLPLGYAFVNKQMHKKVQAAIINDLAERYPMIVVAQTVDKLKDSGFYWATRSGVTVSMADVLVPPRKKEILDSYEERAEKVEKQFQRGALNHDERNEALVEIWKEATDEVGQALREHYPADNPIITIVDSGATGNFTQTRTLAGMKGLVTNPKGEFIPRPIKSSFREGLTVLEYFINTHGARKGLADTALRTADSGYLTRRLVDVSQDVIVREHDCQTERGIMVELAERQGDGTLIRDPYIETSAYARTLGADAVDEAGNVVVARGEDLGDPEIEACLAAGITQVKVRSVLTCTTGTGVCATCYGRSMATGKLVDIGEAVGIVAAQSIGEPGTQLTMRTFHQGGVGEDITGGLPRVQELFEARVPRGKAPIADVTGRVRLEDGERFYTIAIVPDDGGEEVVYDKLSKRQRLRVFKHEDGSERVLSDGDHVEVGQQLMEGSADPHEVLRVQGPREVQIHLVREVQEVYRAQGVSIHDKHIEVIVRQMLRRVTIIDSGATEFLPGSLIDRAEFEAENRRVVAESGEPAAGRPVLMGITKASLATDSWLSAASFQETTRVLTDAAINCRSDKLNGLKENVIIGKLIPAGTGINRYRNIAVQPTEEARVAAYTIPSYEDQYYSPDFGQATGAAVPLDDYGYSDYR.

4 residues coordinate Zn(2+): cysteine 60, cysteine 62, cysteine 75, and cysteine 78. Mg(2+)-binding residues include aspartate 535, aspartate 537, and aspartate 539. Residues cysteine 891, cysteine 968, cysteine 975, and cysteine 978 each coordinate Zn(2+).

The protein belongs to the RNA polymerase beta' chain family. The RNAP catalytic core consists of 2 alpha, 1 beta, 1 beta' and 1 omega subunit. When a sigma factor is associated with the core the holoenzyme is formed, which can initiate transcription. It depends on Mg(2+) as a cofactor. Zn(2+) is required as a cofactor.

It catalyses the reaction RNA(n) + a ribonucleoside 5'-triphosphate = RNA(n+1) + diphosphate. DNA-dependent RNA polymerase catalyzes the transcription of DNA into RNA using the four ribonucleoside triphosphates as substrates. In Mycobacterium ulcerans (strain Agy99), this protein is DNA-directed RNA polymerase subunit beta'.